The following is a 408-amino-acid chain: MIIMDTIFVGSAIPDITNRPQLYEWLERNMERSYKDILDDTKLEPEQNVVKTYILESNIHPKKLSRIIKTGKIKPLDEYEFYMLRIGDEGYFFIDAKNPRFWKLYTLQKSEESDKYFNKLISPIKSRLDNLWMPTGDLEKFLKKADYVRGLSTKHDETPFYLDNDVEERANKLSISSNGESVYELIKIIQSLSSDEIQEFEKLIKDFQLLNDTKIKKIFNTIKKLHEFKHLMRITKSKIKIVSEDDKDKFVLEDIYYWGKFTVKGTSIEKHNEIVDKTIENYEQKIEIIEDSLIDYTSSDWGDRIPLIYEFEKEIEDLKNFVEGLISVKEPFKIWGLAKQVEEDMYYISGVDLHNGDRFSLEVTPWWMRLYLPKGSCGNTALRLLSNIQQTYDSETILEVEKYGERIR.

This is an uncharacterized protein from Methanocaldococcus jannaschii (strain ATCC 43067 / DSM 2661 / JAL-1 / JCM 10045 / NBRC 100440) (Methanococcus jannaschii).